A 368-amino-acid chain; its full sequence is Probable dual-specificity RNA methyltransferase RlmN (368 aa).

Residue Glu109 is the Proton acceptor of the active site. Residues 115–355 (YPDRVTMCIS…VTVRDTRGQE (241 aa)) form the Radical SAM core domain. A disulfide bridge connects residues Cys122 and Cys360. [4Fe-4S] cluster is bound by residues Cys129, Cys133, and Cys136. Residues 184–185 (GE), Ser218, 241–243 (SLH), and Asn317 each bind S-adenosyl-L-methionine. Cys360 acts as the S-methylcysteine intermediate in catalysis.

Belongs to the radical SAM superfamily. RlmN family. Requires [4Fe-4S] cluster as cofactor.

It is found in the cytoplasm. The catalysed reaction is adenosine(2503) in 23S rRNA + 2 reduced [2Fe-2S]-[ferredoxin] + 2 S-adenosyl-L-methionine = 2-methyladenosine(2503) in 23S rRNA + 5'-deoxyadenosine + L-methionine + 2 oxidized [2Fe-2S]-[ferredoxin] + S-adenosyl-L-homocysteine. It catalyses the reaction adenosine(37) in tRNA + 2 reduced [2Fe-2S]-[ferredoxin] + 2 S-adenosyl-L-methionine = 2-methyladenosine(37) in tRNA + 5'-deoxyadenosine + L-methionine + 2 oxidized [2Fe-2S]-[ferredoxin] + S-adenosyl-L-homocysteine. In terms of biological role, specifically methylates position 2 of adenine 2503 in 23S rRNA and position 2 of adenine 37 in tRNAs. This chain is Probable dual-specificity RNA methyltransferase RlmN, found in Streptomyces griseus subsp. griseus (strain JCM 4626 / CBS 651.72 / NBRC 13350 / KCC S-0626 / ISP 5235).